A 1084-amino-acid chain; its full sequence is Probable hemoglobin and hemoglobin-haptoglobin-binding protein 3 (1084 aa).

The signal sequence occupies residues 1–24 (MTNFKFSLLACSIAFALNASTVYA). Tandem repeats lie at residues 26–29 (QPTN), 30–33 (QPTN), 34–37 (QPTN), 38–41 (QPTN), 42–45 (QPTN), 46–49 (QPTN), 50–53 (QPTN), 54–57 (QPTN), 58–61 (QPTN), 62–65 (QPTN), 66–69 (QPTN), and 70–73 (QPTN). The 12 X 4 AA tandem repeats of Q-P-T-N stretch occupies residues 26–73 (QPTNQPTNQPTNQPTNQPTNQPTNQPTNQPTNQPTNQPTNQPTNQPTN). The span at 26–75 (QPTNQPTNQPTNQPTNQPTNQPTNQPTNQPTNQPTNQPTNQPTNQPTNQN) shows a compositional bias: low complexity. The tract at residues 26–77 (QPTNQPTNQPTNQPTNQPTNQPTNQPTNQPTNQPTNQPTNQPTNQPTNQNSN) is disordered. The TonB box signature appears at 83–90 (EQINVSGS). The 126-residue stretch at 95–220 (NIKEKKVGET…LGGSVIFETK (126 aa)) folds into the TBDR plug domain. The region spanning 228 to 1084 (DKDYYLSYKR…NYRMSVQFEF (857 aa)) is the TBDR beta-barrel domain. The TonB C-terminal box signature appears at 1067-1084 (NRFYAPGRNYRMSVQFEF).

It belongs to the TonB-dependent receptor family. Hemoglobin/haptoglobin binding protein subfamily.

Its subcellular location is the cell outer membrane. In terms of biological role, acts as a receptor for hemoglobin or the hemoglobin/haptoglobin complex of the human host and is required for heme uptake. The sequence is that of Probable hemoglobin and hemoglobin-haptoglobin-binding protein 3 from Haemophilus influenzae (strain ATCC 51907 / DSM 11121 / KW20 / Rd).